A 320-amino-acid polypeptide reads, in one-letter code: tRNA uridine(34) hydroxylase (320 aa).

A Rhodanese domain is found at 125 to 221 (KEKRPLLLDV…YGLKQGSEHW (97 aa)). Catalysis depends on Cys-181, which acts as the Cysteine persulfide intermediate.

This sequence belongs to the TrhO family.

It carries out the reaction uridine(34) in tRNA + AH2 + O2 = 5-hydroxyuridine(34) in tRNA + A + H2O. In terms of biological role, catalyzes oxygen-dependent 5-hydroxyuridine (ho5U) modification at position 34 in tRNAs. This is tRNA uridine(34) hydroxylase from Protochlamydia amoebophila (strain UWE25).